The following is a 220-amino-acid chain: ATP phosphoribosyltransferase (220 aa).

It belongs to the ATP phosphoribosyltransferase family. Short subfamily. As to quaternary structure, heteromultimer composed of HisG and HisZ subunits.

Its subcellular location is the cytoplasm. It catalyses the reaction 1-(5-phospho-beta-D-ribosyl)-ATP + diphosphate = 5-phospho-alpha-D-ribose 1-diphosphate + ATP. The protein operates within amino-acid biosynthesis; L-histidine biosynthesis; L-histidine from 5-phospho-alpha-D-ribose 1-diphosphate: step 1/9. Catalyzes the condensation of ATP and 5-phosphoribose 1-diphosphate to form N'-(5'-phosphoribosyl)-ATP (PR-ATP). Has a crucial role in the pathway because the rate of histidine biosynthesis seems to be controlled primarily by regulation of HisG enzymatic activity. This Prochlorococcus marinus (strain NATL1A) protein is ATP phosphoribosyltransferase.